A 92-amino-acid polypeptide reads, in one-letter code: MGRECEITGKKTMFGNNVPRKGLSRKKGGGGQHIGVKTRRTFKVNLINKKFFVPELGKSINIKVSASTLRSISKLGLSVFLKKNSKKIEDFI.

Residues 1–34 (MGRECEITGKKTMFGNNVPRKGLSRKKGGGGQHI) are disordered.

The protein belongs to the bacterial ribosomal protein bL28 family.

In Borrelia turicatae (strain 91E135), this protein is Large ribosomal subunit protein bL28.